Consider the following 517-residue polypeptide: Crotonobetaine/carnitine--CoA ligase (517 aa).

This sequence belongs to the ATP-dependent AMP-binding enzyme family.

The catalysed reaction is 4-(trimethylamino)butanoate + ATP + CoA = 4-(trimethylamino)butanoyl-CoA + AMP + diphosphate. The enzyme catalyses crotonobetaine + ATP + CoA = crotonobetainyl-CoA + AMP + diphosphate. It catalyses the reaction (R)-carnitine + ATP + CoA = (R)-carnitinyl-CoA + AMP + diphosphate. It functions in the pathway amine and polyamine metabolism; carnitine metabolism. In terms of biological role, catalyzes the transfer of CoA to carnitine, generating the initial carnitinyl-CoA needed for the CaiB reaction cycle. Also has activity toward crotonobetaine and gamma-butyrobetaine. The chain is Crotonobetaine/carnitine--CoA ligase from Escherichia coli (strain K12 / MC4100 / BW2952).